A 445-amino-acid polypeptide reads, in one-letter code: Meiosis-specific serine/threonine-protein kinase mek1 (445 aa).

The 55-residue stretch at Val-62–Ile-116 folds into the FHA domain. Positions Asn-160–Phe-421 constitute a Protein kinase domain. Residues Leu-166–Ile-174 and Lys-189 each bind ATP. Residue Asp-281 is the Proton acceptor of the active site.

The protein belongs to the protein kinase superfamily. CAMK Ser/Thr protein kinase family. CHEK2 subfamily.

The catalysed reaction is L-seryl-[protein] + ATP = O-phospho-L-seryl-[protein] + ADP + H(+). It catalyses the reaction L-threonyl-[protein] + ATP = O-phospho-L-threonyl-[protein] + ADP + H(+). Probable protein kinase required for meiotic recombination. This Schizosaccharomyces pombe (strain 972 / ATCC 24843) (Fission yeast) protein is Meiosis-specific serine/threonine-protein kinase mek1 (mek1).